We begin with the raw amino-acid sequence, 463 residues long: Quinolone resistance protein NorB (463 aa).

14 consecutive transmembrane segments (helical) span residues 19–39 (IVLSVITFWLFAQSLVNVVLI), 53–73 (IAVSITALFSGMFVVGVGGLA), 86–106 (IILNILGSLLIIISNIPLLLI), 107–127 (IGRLIQGLSAACIMPATLSII), 142–162 (YWSIGSWGGSGVCSFFGGAVA), 165–185 (LGWRWIFILSIIISLIALFLI), 201–221 (FDIKGLVLLVIMLLSLNILIT), 230–250 (SLLFITLLAIAIGSFSLFIVL), 273–293 (TASNFLLNGVAGTLIVANTFV), 299–319 (YSLLQAGSLSITYLVMVLIMI), 334–354 (PMLIGTGVLIVGECLISLTFL), 357–377 (ILYVICCIIGYLFFGLGLGIY), 403–423 (MASALGGAFGVALSGAVYAIV), and 435–455 (IALWLNAGMAILSFVIILLLV).

This sequence belongs to the major facilitator superfamily. TCR/Tet family.

It localises to the cell membrane. Functionally, multidrug efflux pump that acts independently of NorA and is one of the factors that confers resistance against diverse quinolones and chemical compounds. The protein is Quinolone resistance protein NorB (norB) of Staphylococcus aureus (strain bovine RF122 / ET3-1).